The primary structure comprises 442 residues: GTPase HflX (442 aa).

Residues 186 to 362 (VLVALAGYTN…ALNRVVLKLP (177 aa)) form the Hflx-type G domain. Residues 192-199 (GYTNAGKS), 217-221 (FTTLD), 238-241 (DTVG), 306-309 (NKID), and 341-343 (SAR) each bind GTP. Positions 199 and 219 each coordinate Mg(2+).

The protein belongs to the TRAFAC class OBG-HflX-like GTPase superfamily. HflX GTPase family. As to quaternary structure, monomer. Associates with the 50S ribosomal subunit. Mg(2+) serves as cofactor.

The protein resides in the cytoplasm. Its function is as follows. GTPase that associates with the 50S ribosomal subunit and may have a role during protein synthesis or ribosome biogenesis. This Thermococcus kodakarensis (strain ATCC BAA-918 / JCM 12380 / KOD1) (Pyrococcus kodakaraensis (strain KOD1)) protein is GTPase HflX.